The chain runs to 532 residues: Calnexin homolog 2 (532 aa).

Residues 1 to 25 form the signal peptide; it reads MRERIITFVSLLLVALLSFPSVSYC. Over 26–468 the chain is Lumenal; the sequence is DDQTILYESF…EKAETQPNLT (443 aa). 2 residues coordinate Ca(2+): serine 34 and aspartate 65. A disulfide bridge connects residues cysteine 110 and cysteine 145. An alpha-D-glucoside-binding residues include tyrosine 114, lysine 116, tyrosine 136, and aspartate 143. The disordered stretch occupies residues 208 to 302; it reads NLLSAEDFEP…DEEDGEWEAP (95 aa). The interval 225-358 is p domain (Extended arm); that stretch reads IPDPEDKKPE…RDIPNPDYFE (134 aa). Residues 226–242 show a composition bias toward basic and acidic residues; it reads PDPEDKKPEDWDERAKI. 5 tandem repeats follow at residues 227–238, 244–255, 263–274, 282–293, and 297–307. 4 X approximate repeats stretches follow at residues 227 to 293 and 297 to 354; these read DPED…DWDD and GEWE…IPNP. 2 stretches are compositionally biased toward acidic residues: residues 252 to 283 and 290 to 299; these read DWDEDAPMEIEDEEAEKPEGWLDDEPVEVEDP and DWDDEEDGEW. Cysteine 309 and cysteine 315 form a disulfide bridge. 3 consecutive repeat copies span residues 316–326, 330–340, and 344–354. An alpha-D-glucoside is bound at residue glutamate 373. Position 384 (aspartate 384) interacts with Ca(2+). Asparagine 466 is a glycosylation site (N-linked (GlcNAc...) asparagine). A helical transmembrane segment spans residues 469–489; it reads IGVLISIVIVFLSLFFKLIFG. Over 490-532 the chain is Cytoplasmic; the sequence is GAKAKVEKKKPETAAETSTSEAKTEEKAEAVAAPRKRQTRRES. The disordered stretch occupies residues 493–532; it reads AKVEKKKPETAAETSTSEAKTEEKAEAVAAPRKRQTRRES. The span at 523 to 532 shows a compositional bias: basic residues; that stretch reads PRKRQTRRES.

This sequence belongs to the calreticulin family.

The protein localises to the endoplasmic reticulum membrane. Its function is as follows. Calcium-binding protein that interacts with newly synthesized monoglucosylated glycoproteins in the endoplasmic reticulum. It may act in assisting protein assembly and/or in the retention within the ER of unassembled protein subunits. It seems to play a major role in the quality control apparatus of the ER by the retention of incorrectly folded proteins. The polypeptide is Calnexin homolog 2 (Arabidopsis thaliana (Mouse-ear cress)).